The primary structure comprises 156 residues: ATP synthase subunit b (156 aa).

Residues 7–29 (LLGQAIAFFFFVTFCMKYVWPPL) form a helical membrane-spanning segment.

This sequence belongs to the ATPase B chain family. In terms of assembly, F-type ATPases have 2 components, F(1) - the catalytic core - and F(0) - the membrane proton channel. F(1) has five subunits: alpha(3), beta(3), gamma(1), delta(1), epsilon(1). F(0) has three main subunits: a(1), b(2) and c(10-14). The alpha and beta chains form an alternating ring which encloses part of the gamma chain. F(1) is attached to F(0) by a central stalk formed by the gamma and epsilon chains, while a peripheral stalk is formed by the delta and b chains.

The protein localises to the cell inner membrane. Functionally, f(1)F(0) ATP synthase produces ATP from ADP in the presence of a proton or sodium gradient. F-type ATPases consist of two structural domains, F(1) containing the extramembraneous catalytic core and F(0) containing the membrane proton channel, linked together by a central stalk and a peripheral stalk. During catalysis, ATP synthesis in the catalytic domain of F(1) is coupled via a rotary mechanism of the central stalk subunits to proton translocation. In terms of biological role, component of the F(0) channel, it forms part of the peripheral stalk, linking F(1) to F(0). In Photobacterium profundum (strain SS9), this protein is ATP synthase subunit b.